The chain runs to 215 residues: Adenylate kinase (215 aa).

ATP is bound at residue 10-15; the sequence is GTGKGT. The segment at 30 to 59 is NMP; it reads STGDMLRESVVLKNKIGMIIKNIIEEGKLV. AMP-binding positions include Thr31, Arg36, 57–59, 85–88, and Gln92; these read KLV and GFPR. Residues 122-159 form an LID region; it reads GRRIHIQSGRIYHVKFKPPKIKDKDDLTGQTLITRKDD. Residues Arg123 and 132–133 contribute to the ATP site; that span reads IY. Arg156 and Arg167 together coordinate AMP. Leu200 contributes to the ATP binding site.

It belongs to the adenylate kinase family. In terms of assembly, monomer.

Its subcellular location is the cytoplasm. The enzyme catalyses AMP + ATP = 2 ADP. It participates in purine metabolism; AMP biosynthesis via salvage pathway; AMP from ADP: step 1/1. Functionally, catalyzes the reversible transfer of the terminal phosphate group between ATP and AMP. Plays an important role in cellular energy homeostasis and in adenine nucleotide metabolism. The protein is Adenylate kinase of Buchnera aphidicola subsp. Acyrthosiphon pisum (strain 5A).